We begin with the raw amino-acid sequence, 97 residues long: Large ribosomal subunit protein bL36m (97 aa).

The protein belongs to the bacterial ribosomal protein bL36 family. As to quaternary structure, component of the mitochondrial ribosome large subunit (39S) which comprises a 16S rRNA and about 50 distinct proteins.

Its subcellular location is the mitochondrion. This Rattus norvegicus (Rat) protein is Large ribosomal subunit protein bL36m (Mrpl36).